A 150-amino-acid polypeptide reads, in one-letter code: NADH-quinone oxidoreductase subunit A (150 aa).

Transmembrane regions (helical) follow at residues 14 to 34 (FAVF…GAFF), 66 to 86 (FYLV…LYAW), and 96 to 116 (IGFI…VYLV).

The protein belongs to the complex I subunit 3 family. In terms of assembly, NDH-1 is composed of 13 different subunits. Subunits NuoA, H, J, K, L, M, N constitute the membrane sector of the complex.

The protein localises to the cell inner membrane. It catalyses the reaction a quinone + NADH + 5 H(+)(in) = a quinol + NAD(+) + 4 H(+)(out). Its function is as follows. NDH-1 shuttles electrons from NADH, via FMN and iron-sulfur (Fe-S) centers, to quinones in the respiratory chain. The immediate electron acceptor for the enzyme in this species is believed to be ubiquinone. Couples the redox reaction to proton translocation (for every two electrons transferred, four hydrogen ions are translocated across the cytoplasmic membrane), and thus conserves the redox energy in a proton gradient. This Yersinia enterocolitica serotype O:8 / biotype 1B (strain NCTC 13174 / 8081) protein is NADH-quinone oxidoreductase subunit A.